Reading from the N-terminus, the 194-residue chain is Probable GTP-binding protein EngB (194 aa).

The EngB-type G domain occupies 22 to 194; it reads DLPEYALAGR…AWQFIKEGME (173 aa). GTP-binding positions include 30-37, 57-61, 75-78, 142-145, and 174-176; these read GRSNVGKS, GKTQT, DVPG, TKAD, and FSS. Mg(2+) contacts are provided by Ser37 and Thr59.

This sequence belongs to the TRAFAC class TrmE-Era-EngA-EngB-Septin-like GTPase superfamily. EngB GTPase family. The cofactor is Mg(2+).

Its function is as follows. Necessary for normal cell division and for the maintenance of normal septation. The chain is Probable GTP-binding protein EngB from Listeria welshimeri serovar 6b (strain ATCC 35897 / DSM 20650 / CCUG 15529 / CIP 8149 / NCTC 11857 / SLCC 5334 / V8).